The primary structure comprises 230 residues: MAKRGKKYVEAAKLVDRAAAYSATEAVELVKKTNTAKFDATVEAAFRLGVDPKKADQQIRGAVVLPHGTGKVQRVLVFAKGEKAKEAEAAGADFVGDTDYIGKIQQGWFDFDVVVATPDMMGEVGKLGRVLGPKGLMPNPKTGTVTFDVTKAVNEIKAGKVEYRVDKAGNIHVPIGKVSFEDAKLVENFKTIADTLLKVKPSAAKGTYMKNVTVASTMGPGVRVDVSTLA.

The protein belongs to the universal ribosomal protein uL1 family. In terms of assembly, part of the 50S ribosomal subunit.

Its function is as follows. Binds directly to 23S rRNA. The L1 stalk is quite mobile in the ribosome, and is involved in E site tRNA release. Functionally, protein L1 is also a translational repressor protein, it controls the translation of the L11 operon by binding to its mRNA. This chain is Large ribosomal subunit protein uL1, found in Bacillus cereus (strain G9842).